Consider the following 583-residue polypeptide: Tetratricopeptide repeat protein 39C (583 aa).

Residues 1–22 (MAGSEQQRPRRRDDGDSDAAAA) are disordered. TPR repeat units follow at residues 315-348 (SLFM…AVDQ), 353-386 (HVCL…SRWS), and 485-518 (GLKY…ELCR).

This sequence belongs to the TTC39 family.

This chain is Tetratricopeptide repeat protein 39C (TTC39C), found in Homo sapiens (Human).